A 282-amino-acid polypeptide reads, in one-letter code: Large ribosomal subunit protein uL4c (282 aa).

The N-terminal 49 residues, 1 to 49, are a transit peptide targeting the chloroplast; the sequence is MASSATAPNSLSFFSSSLFLSSSHQIPKTYISVSKLGSGRVSKPLSVSS. The segment at 106 to 138 is disordered; it reads EVRGGGIKPYSQKKTGHARRGSQRTPLRPGGGV.

It belongs to the universal ribosomal protein uL4 family. Part of the 50S ribosomal subunit.

Its subcellular location is the plastid. The protein resides in the chloroplast. Functionally, this protein binds directly and specifically to 23S rRNA. May play a role in plastid transcriptional regulation. This Arabidopsis thaliana (Mouse-ear cress) protein is Large ribosomal subunit protein uL4c (RPL4).